We begin with the raw amino-acid sequence, 533 residues long: uncharacterized protein (533 aa).

Residues 1–26 (MKRFFSKLFSKSPTSGRVPSPDSDYS) are disordered. Ser20 and Ser23 each carry phosphoserine. The residue at position 25 (Tyr25) is a Phosphotyrosine. Ser26 carries the phosphoserine modification. The next 10 helical transmembrane spans lie at 178–198 (ILAV…HILI), 213–230 (YMRV…FEAL), 242–264 (PITY…LVWH), 274–296 (APVA…ICFS), 313–333 (LSPM…EWAA), 353–373 (SILL…AVAS), 394–414 (RVAY…IFCF), 435–455 (IFPI…GGGL), 466–486 (GLIS…FVVV), and 495–515 (IWCG…TVLF).

Belongs to the multi antimicrobial extrusion (MATE) (TC 2.A.66.1) family.

It localises to the vacuole membrane. This is an uncharacterized protein from Schizosaccharomyces pombe (strain 972 / ATCC 24843) (Fission yeast).